The following is a 166-amino-acid chain: HTH-type transcriptional regulator PetP (166 aa).

One can recognise an HTH marR-type domain in the interval 17-152; the sequence is DEQLRKGIEA…FRQVLEAMMD (136 aa). Positions 66 to 89 form a DNA-binding region, H-T-H motif; that stretch reads VTTLISVLGVTKQSLNRVLRTLID.

Its function is as follows. Necessary for photosynthetic and respiratory growth. The sequence is that of HTH-type transcriptional regulator PetP (petP) from Rhodobacter capsulatus (strain ATCC BAA-309 / NBRC 16581 / SB1003).